The primary structure comprises 64 residues: Large ribosomal subunit protein bL33 (64 aa).

Belongs to the bacterial ribosomal protein bL33 family.

The chain is Large ribosomal subunit protein bL33 from Nostoc punctiforme (strain ATCC 29133 / PCC 73102).